Consider the following 185-residue polypeptide: Large ribosomal subunit protein uL5 (185 aa).

It belongs to the universal ribosomal protein uL5 family. Part of the 50S ribosomal subunit; part of the 5S rRNA/L5/L18/L25 subcomplex. Contacts the 5S rRNA and the P site tRNA. Forms a bridge to the 30S subunit in the 70S ribosome.

Functionally, this is one of the proteins that bind and probably mediate the attachment of the 5S RNA into the large ribosomal subunit, where it forms part of the central protuberance. In the 70S ribosome it contacts protein S13 of the 30S subunit (bridge B1b), connecting the 2 subunits; this bridge is implicated in subunit movement. Contacts the P site tRNA; the 5S rRNA and some of its associated proteins might help stabilize positioning of ribosome-bound tRNAs. The sequence is that of Large ribosomal subunit protein uL5 from Bradyrhizobium diazoefficiens (strain JCM 10833 / BCRC 13528 / IAM 13628 / NBRC 14792 / USDA 110).